Consider the following 33-residue polypeptide: uncharacterized protein (33 aa).

Residues 1–33 are disordered; it reads MQPGTGLSFDISQILKQGSDPKQKLPERQAIVL.

This is an uncharacterized protein from Caenorhabditis elegans.